A 310-amino-acid chain; its full sequence is Pantothenate kinase (310 aa).

95–102 is a binding site for ATP; it reads GSVAVGKS.

The protein belongs to the prokaryotic pantothenate kinase family.

It localises to the cytoplasm. It carries out the reaction (R)-pantothenate + ATP = (R)-4'-phosphopantothenate + ADP + H(+). It participates in cofactor biosynthesis; coenzyme A biosynthesis; CoA from (R)-pantothenate: step 1/5. The sequence is that of Pantothenate kinase from Mycobacteroides abscessus (strain ATCC 19977 / DSM 44196 / CCUG 20993 / CIP 104536 / JCM 13569 / NCTC 13031 / TMC 1543 / L948) (Mycobacterium abscessus).